A 15281-amino-acid polypeptide reads, in one-letter code: Cyclosporin synthetase simA (15281 aa).

Residues Ser34–Thr463 form a condensation 1 region. The tract at residues Ser513–Val918 is adenylation 1. In terms of domain architecture, Carrier 1 spans Ala1026 to Ser1100. Ser1060 carries the post-translational modification O-(pantetheine 4'-phosphoryl)serine. A condensation 2 region spans residues Ser1118 to Thr1549. The segment at Ser1599–Val2004 is adenylation 2. The tract at residues Ser2067–Val2251 is methyltransferase (M) domain 1. Residues Ala2524 to Thr2598 form the Carrier 2 domain. Position 2558 is an O-(pantetheine 4'-phosphoryl)serine (Ser2558). The tract at residues Ser2616–Ala3044 is condensation 3. The interval Ser3096–Val3498 is adenylation 3. The segment at Ser3562–Phe3749 is methyltransferase (M) domain 2. The Carrier 3 domain occupies Ala4011 to Ser4085. Ser4045 is subject to O-(pantetheine 4'-phosphoryl)serine. A condensation 4 region spans residues Val4100 to Pro4530. The segment at Ser4582 to Val4986 is adenylation 4. The interval Thr5052–Thr5241 is methyltransferase (M) domain 3. In terms of domain architecture, Carrier 4 spans Pro5503 to Ser5577. Ser5537 carries the post-translational modification O-(pantetheine 4'-phosphoryl)serine. The condensation 5 stretch occupies residues Val5592 to Pro6023. Residues Thr6075–Val6478 form an adenylation 5 region. Residues Trp6545–Leu6729 are methyltransferase (M) domain 4. A Carrier 5 domain is found at Ala7000–Ser7074. Position 7034 is an O-(pantetheine 4'-phosphoryl)serine (Ser7034). The condensation 6 stretch occupies residues Ser7092 to Ser7517. Positions Thr7572–Val7976 are adenylation 6. Positions Pro8060–Ser8134 constitute a Carrier 6 domain. O-(pantetheine 4'-phosphoryl)serine is present on Ser8094. The condensation 7 stretch occupies residues Ser8152 to Ile8582. Positions Thr8633–Val9038 are adenylation 7. The methyltransferase (M) domain 5 stretch occupies residues Pro9111–Asp9288. One can recognise a Carrier 7 domain in the interval Ala9555 to Ser9629. Ser9589 is subject to O-(pantetheine 4'-phosphoryl)serine. The tract at residues Ser9647–Thr10077 is condensation 8. An adenylation 8 region spans residues Ser10127–Val10529. Residues Arg10588–Leu10768 form a methyltransferase (M) domain 6 region. One can recognise a Carrier 8 domain in the interval Ala11052–Ser11126. Ser11086 carries the post-translational modification O-(pantetheine 4'-phosphoryl)serine. Positions Ser11144–Thr11567 are condensation 9. An adenylation 9 region spans residues Thr11616–Val12019. A Carrier 9 domain is found at Ala12124–Ser12198. Residue Ser12158 is modified to O-(pantetheine 4'-phosphoryl)serine. Positions Ser12216–Asp12645 are condensation 10. The tract at residues Thr12696–Val13096 is adenylation 10. The interval Tyr13162–Asp13343 is methyltransferase (M) domain 7. The Carrier 10 domain maps to Ala13620–Ser13694. Ser13654 bears the O-(pantetheine 4'-phosphoryl)serine mark. The segment at Glu13710–Leu14143 is condensation 11. An adenylation 11 region spans residues Thr14194 to Val14598. Residues Ala14695–Gln14769 enclose the Carrier 11 domain. Residue Ser14729 is modified to O-(pantetheine 4'-phosphoryl)serine. Residues Asp14814–Gln15158 form a condensation 12 region. Residues Gln15169–Val15224 are disordered. Residues Ala15173–Asn15211 are compositionally biased toward low complexity. The segment covering Ser15213–Val15224 has biased composition (polar residues).

The protein belongs to the NRP synthetase family. Pantetheine 4'-phosphate serves as cofactor.

In terms of biological role, nonribosomal peptide synthetase; part of the gene cluster that mediates the biosynthesis of the cycloundecapeptide cyclosporin A (CsA), a compound with antifungal activity used as an immunosuppressant drug. Cyclosporin A contains three non-proteinogenic amino acids: D-alanine, alpha-amino butyric acid and the unusual amino acid (4R)-4-[(E)-2-butenyl]-4-methyl-l-threonine (Bmt). The nonribosomal peptide synthetase (NRPS) catalyzes the elongation and cyclization of the undecapeptide chain. SimA contains 11 modules responsible for sequential uptake of substrates and chain elongation. In addition to the core condensation-adenylation-thiolation (C-A-T) domains present in each module, seven modules contain an additional N-methylation (M) domain (modules 2, 3, 4, 5, 7, 8, and 10). The terminal C domain (C12 or Ct) is implicated in cyclization of the peptidyl chains to form CsA. The first module (A1) takes up D-Ala which is provided by the alanine racemase simB. The A2, A3, A8, and A10 domains have the same substrate-specific signature for recognition of leucine residues. The unusual amino acid (4R)-4-[(E)-2-butenyl]-4-methyl-l-threonine (Bmt) is recognized by the fifth module (A5). The A11 domain recognizes L-Ala. The PKS simG mediates the biosynthesis of 3R-hydroxyl-4R-methyl-6E-octenoic acid from acetyl coenzyme A (acetyl-CoA), malonyl-CoA, and S-adenosylmethionine, and 3R-hydroxyl-4R-methyl-6E-octenoic acid is then be repeatedly oxidized by simI to 3R-hydroxy-4R-methyl-2-keto-6E-octenoic acid. The latter is likely converted to Bmt through the action of the aminotransferase SimJ. The protein is Cyclosporin synthetase simA of Tolypocladium inflatum (Cyclosporin fungus).